The primary structure comprises 473 residues: Mannose-1-phosphate guanylyltransferase (473 aa).

Belongs to the mannose-6-phosphate isomerase type 2 family. As to quaternary structure, homodimer.

The catalysed reaction is alpha-D-mannose 1-phosphate + GTP + H(+) = GDP-alpha-D-mannose + diphosphate. It functions in the pathway nucleotide-sugar biosynthesis; GDP-alpha-D-mannose biosynthesis; GDP-alpha-D-mannose from alpha-D-mannose 1-phosphate (GTP route): step 1/1. Its pathway is bacterial outer membrane biogenesis; LPS O-antigen biosynthesis. Its function is as follows. Involved in GDP-mannose biosynthesis which serves as the activated sugar nucleotide precursor for mannose residues in cell surface polysaccharides. This enzyme participates in synthesis of the LPS group C2 O antigen. This is Mannose-1-phosphate guanylyltransferase (rfbM) from Salmonella muenchen.